Here is a 98-residue protein sequence, read N- to C-terminus: Defensin-A1 (98 aa).

Positions 1 to 19 are cleaved as a signal peptide; that stretch reads MQTLSFLLALLFLVAQTPA. Positions 20 to 62 are excised as a propeptide; the sequence is QPTGEGEKGGTIQEPEATEAQDTAAVLMAAGAADGDDSDTKQL. Disulfide bonds link Cys67–Cys94, Cys69–Cys83, and Cys73–Cys93. The propeptide occupies 97-98; sequence IK.

The protein belongs to the alpha-defensin family. In terms of tissue distribution, highly expressed in intestine, and expressed at lower levels in lung and spleen.

The protein resides in the secreted. In terms of biological role, has antimicrobial activity. This is Defensin-A1 from Ornithorhynchus anatinus (Duckbill platypus).